Here is a 287-residue protein sequence, read N- to C-terminus: Large ribosomal subunit protein uL2 (287 aa).

A disordered region spans residues 221–287; sequence RGSVMNPCDH…SKRSRGGRDS (67 aa). The span at 258–287 shows a compositional bias: basic residues; that stretch reads KTRKRNKPSNRYVLRKRRKTSKRSRGGRDS.

This sequence belongs to the universal ribosomal protein uL2 family. As to quaternary structure, part of the 50S ribosomal subunit. Forms a bridge to the 30S subunit in the 70S ribosome.

In terms of biological role, one of the primary rRNA binding proteins. Required for association of the 30S and 50S subunits to form the 70S ribosome, for tRNA binding and peptide bond formation. It has been suggested to have peptidyltransferase activity; this is somewhat controversial. Makes several contacts with the 16S rRNA in the 70S ribosome. This chain is Large ribosomal subunit protein uL2, found in Parasynechococcus marenigrum (strain WH8102).